The sequence spans 741 residues: Catalase-peroxidase (741 aa).

Positions 1–23 are cleaved as a signal peptide; that stretch reads MLKKIITALGMSGMLLASSNAIA. Positions 102 to 223 form a cross-link, tryptophyl-tyrosyl-methioninium (Trp-Tyr) (with M-249); it reads WHDAGTYRIY…YAATQMGLIY (122 aa). Histidine 103 (proton acceptor) is an active-site residue. Residues 223 to 249 constitute a cross-link (tryptophyl-tyrosyl-methioninium (Tyr-Met) (with W-102)); the sequence is YVNPEGPDGKPDIKGAASEIRQAFRAM. Residue histidine 264 participates in heme b binding.

Belongs to the peroxidase family. Peroxidase/catalase subfamily. Homodimer or homotetramer. Heme b serves as cofactor. Post-translationally, formation of the three residue Trp-Tyr-Met cross-link is important for the catalase, but not the peroxidase activity of the enzyme.

It catalyses the reaction H2O2 + AH2 = A + 2 H2O. It carries out the reaction 2 H2O2 = O2 + 2 H2O. Bifunctional enzyme with both catalase and broad-spectrum peroxidase activity. In Francisella tularensis subsp. holarctica (strain FTNF002-00 / FTA), this protein is Catalase-peroxidase.